Here is a 160-residue protein sequence, read N- to C-terminus: H/ACA ribonucleoprotein complex subunit 2-like protein (160 aa).

This sequence belongs to the eukaryotic ribosomal protein eL8 family. As to quaternary structure, component of the small nucleolar ribonucleoprotein particle containing H/ACA-type snoRNAs (H/ACA snoRNPs).

Its subcellular location is the nucleus. It is found in the nucleolus. In terms of biological role, required for ribosome biogenesis. Part of a complex which catalyzes pseudouridylation of rRNA. This involves the isomerization of uridine such that the ribose is subsequently attached to C5, instead of the normal N1. Pseudouridine ('psi') residues may serve to stabilize the conformation of rRNAs. The polypeptide is H/ACA ribonucleoprotein complex subunit 2-like protein (NHP2) (Drosophila yakuba (Fruit fly)).